We begin with the raw amino-acid sequence, 965 residues long: Klaroid protein (965 aa).

The segment at 1–20 is disordered; the sequence is MSENTYQIETRRRSRSKTPF. The next 2 helical transmembrane spans lie at 303-323 and 343-363; these read TIGG…GSVL and FLIF…LLLQ. A coiled-coil region spans residues 585 to 612; it reads SSDAEVQIERLNREIAFIKLALSDKQAE. The SUN domain maps to 801-963; sequence GGQILSTRCT…YRFRVHGKPP (163 aa).

As to quaternary structure, core component of the LINC complex which is composed of inner nuclear membrane SUN domain-containing proteins coupled to outer nuclear membrane KASH domain-containing nesprins. As to expression, expressed in all cells in the eye disk.

It localises to the membrane. The protein localises to the cytoplasm. Its subcellular location is the cytoskeleton. The protein resides in the microtubule organizing center. It is found in the perinuclear region. Component of the LINC (LInker of Nucleoskeleton and Cytoskeleton) complex involved in the connection between the nuclear lamina and the cytoskeleton. Is required to nuclear migration in eye and to anchor klar in the nuclear membrane. The sequence is that of Klaroid protein from Drosophila melanogaster (Fruit fly).